We begin with the raw amino-acid sequence, 385 residues long: Cytochrome b (385 aa).

A run of 4 helical transmembrane segments spans residues 34 to 54 (FGSI…ILTM), 78 to 99 (WFIR…FIHI), 114 to 134 (WYSG…GYVL), and 179 to 199 (FLVL…THLL). Residues H84 and H98 each coordinate heme b. H183 and H197 together coordinate heme b. Residue H202 participates in a ubiquinone binding. 4 helical membrane-spanning segments follow: residues 227 to 247 (FKDI…STLF), 289 to 309 (LMGV…PFLI), 321 to 341 (FMQF…WLGA), and 348 to 368 (YTIM…FLFP).

This sequence belongs to the cytochrome b family. As to quaternary structure, the cytochrome bc1 complex contains 3 respiratory subunits (MT-CYB, CYC1 and UQCRFS1), 2 core proteins (UQCRC1 and UQCRC2) and probably 6 low-molecular weight proteins. Heme b serves as cofactor.

Its subcellular location is the mitochondrion inner membrane. Functionally, component of the ubiquinol-cytochrome c reductase complex (complex III or cytochrome b-c1 complex) that is part of the mitochondrial respiratory chain. The b-c1 complex mediates electron transfer from ubiquinol to cytochrome c. Contributes to the generation of a proton gradient across the mitochondrial membrane that is then used for ATP synthesis. The protein is Cytochrome b (MT-CYB) of Myxine glutinosa (Atlantic hagfish).